A 364-amino-acid chain; its full sequence is Aminomethyltransferase (364 aa).

The protein belongs to the GcvT family. The glycine cleavage system is composed of four proteins: P, T, L and H.

It carries out the reaction N(6)-[(R)-S(8)-aminomethyldihydrolipoyl]-L-lysyl-[protein] + (6S)-5,6,7,8-tetrahydrofolate = N(6)-[(R)-dihydrolipoyl]-L-lysyl-[protein] + (6R)-5,10-methylene-5,6,7,8-tetrahydrofolate + NH4(+). The glycine cleavage system catalyzes the degradation of glycine. This chain is Aminomethyltransferase, found in Salmonella paratyphi B (strain ATCC BAA-1250 / SPB7).